A 173-amino-acid chain; its full sequence is Shikimate kinase (173 aa).

14-19 (GAGKST) contributes to the ATP binding site. A Mg(2+)-binding site is contributed by S18. The substrate site is built by D36, R60, and G82. R120 lines the ATP pocket. Position 140 (R140) interacts with substrate. Q157 serves as a coordination point for ATP.

This sequence belongs to the shikimate kinase family. Monomer. Mg(2+) is required as a cofactor.

It localises to the cytoplasm. It carries out the reaction shikimate + ATP = 3-phosphoshikimate + ADP + H(+). It participates in metabolic intermediate biosynthesis; chorismate biosynthesis; chorismate from D-erythrose 4-phosphate and phosphoenolpyruvate: step 5/7. Catalyzes the specific phosphorylation of the 3-hydroxyl group of shikimic acid using ATP as a cosubstrate. This chain is Shikimate kinase, found in Buchnera aphidicola subsp. Acyrthosiphon pisum (strain APS) (Acyrthosiphon pisum symbiotic bacterium).